The following is a 278-amino-acid chain: Sulfur carrier protein FdhD (278 aa).

Residue cysteine 121 is the Cysteine persulfide intermediate of the active site. Mo-bis(molybdopterin guanine dinucleotide) is bound at residue 260–265 (FCKPGR).

It belongs to the FdhD family.

The protein resides in the cytoplasm. Its function is as follows. Required for formate dehydrogenase (FDH) activity. Acts as a sulfur carrier protein that transfers sulfur from IscS to the molybdenum cofactor prior to its insertion into FDH. The polypeptide is Sulfur carrier protein FdhD (Salmonella agona (strain SL483)).